Here is a 97-residue protein sequence, read N- to C-terminus: Large ribosomal subunit protein bL27 (97 aa).

Residues M1 to F12 constitute a propeptide that is removed on maturation. The disordered stretch occupies residues H14–A37.

It belongs to the bacterial ribosomal protein bL27 family. The N-terminus is cleaved by ribosomal processing cysteine protease Prp.

This chain is Large ribosomal subunit protein bL27, found in Streptococcus gordonii (strain Challis / ATCC 35105 / BCRC 15272 / CH1 / DL1 / V288).